Reading from the N-terminus, the 178-residue chain is Large ribosomal subunit protein uL5 (178 aa).

Belongs to the universal ribosomal protein uL5 family. Part of the 50S ribosomal subunit; part of the 5S rRNA/L5/L18/L25 subcomplex. Contacts the 5S rRNA and the P site tRNA. Forms a bridge to the 30S subunit in the 70S ribosome.

This is one of the proteins that bind and probably mediate the attachment of the 5S RNA into the large ribosomal subunit, where it forms part of the central protuberance. In the 70S ribosome it contacts protein S13 of the 30S subunit (bridge B1b), connecting the 2 subunits; this bridge is implicated in subunit movement. Contacts the P site tRNA; the 5S rRNA and some of its associated proteins might help stabilize positioning of ribosome-bound tRNAs. In Syntrophomonas wolfei subsp. wolfei (strain DSM 2245B / Goettingen), this protein is Large ribosomal subunit protein uL5.